Here is a 182-residue protein sequence, read N- to C-terminus: Orotate phosphoribosyltransferase (182 aa).

Residues arginine 91, lysine 92, lysine 95, histidine 97, and 117–125 contribute to the 5-phospho-alpha-D-ribose 1-diphosphate site; that span reads EDVTTTGGS. Threonine 121 and arginine 149 together coordinate orotate.

Belongs to the purine/pyrimidine phosphoribosyltransferase family. PyrE subfamily. As to quaternary structure, homodimer. Mg(2+) serves as cofactor.

The enzyme catalyses orotidine 5'-phosphate + diphosphate = orotate + 5-phospho-alpha-D-ribose 1-diphosphate. It participates in pyrimidine metabolism; UMP biosynthesis via de novo pathway; UMP from orotate: step 1/2. Its function is as follows. Catalyzes the transfer of a ribosyl phosphate group from 5-phosphoribose 1-diphosphate to orotate, leading to the formation of orotidine monophosphate (OMP). The protein is Orotate phosphoribosyltransferase of Pyrococcus abyssi (strain GE5 / Orsay).